A 156-amino-acid polypeptide reads, in one-letter code: Small ribosomal subunit protein uS7 (156 aa).

Belongs to the universal ribosomal protein uS7 family. In terms of assembly, part of the 30S ribosomal subunit. Contacts proteins S9 and S11.

One of the primary rRNA binding proteins, it binds directly to 16S rRNA where it nucleates assembly of the head domain of the 30S subunit. Is located at the subunit interface close to the decoding center, probably blocks exit of the E-site tRNA. The sequence is that of Small ribosomal subunit protein uS7 from Parafrankia sp. (strain EAN1pec).